A 104-amino-acid chain; its full sequence is Large ribosomal subunit protein bL21 (104 aa).

The protein belongs to the bacterial ribosomal protein bL21 family. In terms of assembly, part of the 50S ribosomal subunit. Contacts protein L20.

This protein binds to 23S rRNA in the presence of protein L20. The chain is Large ribosomal subunit protein bL21 from Rhodopirellula baltica (strain DSM 10527 / NCIMB 13988 / SH1).